The primary structure comprises 703 residues: DnaJ homolog subfamily C member 14 (703 aa).

Disordered regions lie at residues Met-1–Ser-150 and Glu-164–Ser-229. Residues Ser-17–Ser-28 show a composition bias toward low complexity. The span at His-75–Pro-84 shows a compositional bias: pro residues. Composition is skewed to acidic residues over residues Tyr-89–Val-102 and Glu-164–Glu-176. Residues Pro-193 to Phe-202 are compositionally biased toward basic residues. Positions Leu-203–Ala-218 are enriched in basic and acidic residues. Residues Pro-219–Arg-228 are compositionally biased toward basic residues. 3 helical membrane-spanning segments follow: residues Trp-254–Ile-274, Val-305–Leu-325, and Val-327–Trp-347. Residues Asn-444–Arg-508 enclose the J domain. Disordered stretches follow at residues Phe-622–Asp-643 and Met-659–Arg-703. The span at Gly-673 to Val-684 shows a compositional bias: polar residues. Positions Pro-691–Arg-703 are enriched in basic residues.

Interacts with the FxxxFxxxF motif of DRD1 via its C-terminal domain. In terms of tissue distribution, detected in heart, brain, lung, liver, skeletal muscle, kidney and testis.

The protein resides in the endoplasmic reticulum membrane. In terms of biological role, regulates the export of target proteins, such as DRD1, from the endoplasmic reticulum to the cell surface. This Rattus norvegicus (Rat) protein is DnaJ homolog subfamily C member 14 (Dnajc14).